An 89-amino-acid polypeptide reads, in one-letter code: Small ribosomal subunit protein uS15 (89 aa).

The protein belongs to the universal ribosomal protein uS15 family. As to quaternary structure, part of the 30S ribosomal subunit. Forms a bridge to the 50S subunit in the 70S ribosome, contacting the 23S rRNA.

Its function is as follows. One of the primary rRNA binding proteins, it binds directly to 16S rRNA where it helps nucleate assembly of the platform of the 30S subunit by binding and bridging several RNA helices of the 16S rRNA. In terms of biological role, forms an intersubunit bridge (bridge B4) with the 23S rRNA of the 50S subunit in the ribosome. The protein is Small ribosomal subunit protein uS15 of Alcanivorax borkumensis (strain ATCC 700651 / DSM 11573 / NCIMB 13689 / SK2).